The sequence spans 582 residues: PCNA-interacting partner (582 aa).

2 stretches are compositionally biased toward polar residues: residues Gly471–Asn487 and Lys501–Ser510. The interval Gly471–Lys514 is disordered.

It belongs to the PARI family. In terms of assembly, interacts with RAD51 and PCNA. Interacts with PARP1. Interacts with TASOR.

Its subcellular location is the cytoplasm. The protein resides in the nucleus. Its function is as follows. Required to suppress inappropriate homologous recombination, thereby playing a central role DNA repair and in the maintenance of genomic stability. Antagonizes homologous recombination by interfering with the formation of the RAD51-DNA homologous recombination structure. Binds single-strand DNA and poly(A) homopolymers. Positively regulate the poly(ADP-ribosyl)ation activity of PARP1; however such function may be indirect. In Bos taurus (Bovine), this protein is PCNA-interacting partner (PARPBP).